The sequence spans 269 residues: Subtilisin Savinase (269 aa).

Residue glutamine 2 participates in Ca(2+) binding. One can recognise a Peptidase S8 domain in the interval 5–268 (PWGISRVQAP…SGLVNAEAAT (264 aa)). Aspartate 32 functions as the Charge relay system in the catalytic mechanism. A Ca(2+)-binding site is contributed by aspartate 40. The active-site Charge relay system is histidine 62. Residues leucine 73, asparagine 75, isoleucine 77, valine 79, alanine 163, tyrosine 165, and alanine 168 each coordinate Ca(2+). Serine 215 functions as the Charge relay system in the catalytic mechanism.

Belongs to the peptidase S8 family. Ca(2+) is required as a cofactor.

Its subcellular location is the secreted. The enzyme catalyses Hydrolysis of proteins with broad specificity for peptide bonds, and a preference for a large uncharged residue in P1. Hydrolyzes peptide amides.. Its function is as follows. Subtilisin is an extracellular alkaline serine protease, it catalyzes the hydrolysis of proteins and peptide amides. In Lederbergia lenta (Bacillus lentus), this protein is Subtilisin Savinase.